A 216-amino-acid chain; its full sequence is Probable nicotinate-nucleotide adenylyltransferase (216 aa).

The protein belongs to the NadD family.

The catalysed reaction is nicotinate beta-D-ribonucleotide + ATP + H(+) = deamido-NAD(+) + diphosphate. The protein operates within cofactor biosynthesis; NAD(+) biosynthesis; deamido-NAD(+) from nicotinate D-ribonucleotide: step 1/1. Its function is as follows. Catalyzes the reversible adenylation of nicotinate mononucleotide (NaMN) to nicotinic acid adenine dinucleotide (NaAD). In Shewanella baltica (strain OS195), this protein is Probable nicotinate-nucleotide adenylyltransferase.